Reading from the N-terminus, the 369-residue chain is Flagellar P-ring protein (369 aa).

Residues 1–22 form the signal peptide; that stretch reads MIKLKQLIAATLLLSTAFGVHA.

Belongs to the FlgI family. In terms of assembly, the basal body constitutes a major portion of the flagellar organelle and consists of four rings (L,P,S, and M) mounted on a central rod.

Its subcellular location is the periplasm. It is found in the bacterial flagellum basal body. Assembles around the rod to form the L-ring and probably protects the motor/basal body from shearing forces during rotation. The sequence is that of Flagellar P-ring protein from Pseudomonas savastanoi pv. phaseolicola (strain 1448A / Race 6) (Pseudomonas syringae pv. phaseolicola (strain 1448A / Race 6)).